The primary structure comprises 364 residues: Mannonate dehydratase (364 aa).

Belongs to the mannonate dehydratase family. The cofactor is Fe(2+). Mn(2+) serves as cofactor.

It catalyses the reaction D-mannonate = 2-dehydro-3-deoxy-D-gluconate + H2O. The protein operates within carbohydrate metabolism; pentose and glucuronate interconversion. Catalyzes the dehydration of D-mannonate. This chain is Mannonate dehydratase, found in Streptococcus equi subsp. zooepidemicus (strain MGCS10565).